The chain runs to 177 residues: Large ribosomal subunit protein uL5 (177 aa).

The protein belongs to the universal ribosomal protein uL5 family. As to quaternary structure, part of the 50S ribosomal subunit. Interacts with protein L18 and the 5S rRNA, and probably with tRNAs. Forms a bridge to the 30S subunit in the 70S ribosome.

This is 1 of 5 proteins that mediates the attachment of the 5S rRNA onto the large ribosomal subunit, stabilizing the orientation of adjacent RNA domains. Forms part of the central protuberance. Modeling places the A and P site tRNAs in close proximity to this protein; the 5S rRNA and some of its associated proteins might help stabilize positioning of ribosome-bound tRNAs. In the 70S ribosome it is thought to contact protein S13 of the 30S subunit (bridge B1b), connecting the 2 subunits; this bridge is implicated in subunit movement. The protein is Large ribosomal subunit protein uL5 (rpl5) of Haloarcula marismortui (strain ATCC 43049 / DSM 3752 / JCM 8966 / VKM B-1809) (Halobacterium marismortui).